Reading from the N-terminus, the 114-residue chain is MDACSLTAKQCTPCQGGIPPLTAEEAEKLLVHVPRWELKDAATKLKRTFRFENFMEALDFARKVGELCEAEGHHPDIGIGWGYCRVEFQTHKINGLHENDFIMAAKVDELAAEA.

This sequence belongs to the pterin-4-alpha-carbinolamine dehydratase family.

The enzyme catalyses (4aS,6R)-4a-hydroxy-L-erythro-5,6,7,8-tetrahydrobiopterin = (6R)-L-erythro-6,7-dihydrobiopterin + H2O. This is Putative pterin-4-alpha-carbinolamine dehydratase from Methylococcus capsulatus (strain ATCC 33009 / NCIMB 11132 / Bath).